A 382-amino-acid polypeptide reads, in one-letter code: Pectinesterase (382 aa).

A signal peptide spans 1–16; that stretch reads MKIIVLLLLAVVLASA. A disulfide bridge links C153 with C164. N179 is a glycosylation site (N-linked (GlcNAc...) asparagine). Residue Q193 coordinates substrate. The active-site Proton donor is the D216. Catalysis depends on D242, which acts as the Nucleophile. Substrate contacts are provided by R306 and W308. 2 N-linked (GlcNAc...) asparagine glycosylation sites follow: N340 and N376.

Belongs to the pectinesterase family. Expressed throughout the midgut with particularly strong expression in the ventriculus.

It localises to the secreted. The catalysed reaction is [(1-&gt;4)-alpha-D-galacturonosyl methyl ester](n) + n H2O = [(1-&gt;4)-alpha-D-galacturonosyl](n) + n methanol + n H(+). Its pathway is glycan metabolism; pectin degradation; 2-dehydro-3-deoxy-D-gluconate from pectin: step 1/5. In terms of biological role, pectinesterase which probably plays an important role in the digestion of plant cell walls. This is Pectinesterase from Sitophilus oryzae (Rice weevil).